Here is a 944-residue protein sequence, read N- to C-terminus: Translation factor GUF1 homolog, mitochondrial (944 aa).

The tr-type G domain maps to 201-379 (KNVRNFCILA…IITDIPYPPI (179 aa)). GTP contacts are provided by residues 210–217 (AHIDSGKS), 271–275 (DTPGH), and 325–328 (NKID).

Belongs to the TRAFAC class translation factor GTPase superfamily. Classic translation factor GTPase family. LepA subfamily.

It is found in the mitochondrion inner membrane. The enzyme catalyses GTP + H2O = GDP + phosphate + H(+). In terms of biological role, promotes mitochondrial protein synthesis. May act as a fidelity factor of the translation reaction, by catalyzing a one-codon backward translocation of tRNAs on improperly translocated ribosomes. Binds to mitochondrial ribosomes in a GTP-dependent manner. The protein is Translation factor GUF1 homolog, mitochondrial of Plasmodium yoelii yoelii.